The sequence spans 402 residues: Tryptophan synthase beta chain (402 aa).

K91 carries the post-translational modification N6-(pyridoxal phosphate)lysine.

The protein belongs to the TrpB family. In terms of assembly, tetramer of two alpha and two beta chains. Requires pyridoxal 5'-phosphate as cofactor.

It catalyses the reaction (1S,2R)-1-C-(indol-3-yl)glycerol 3-phosphate + L-serine = D-glyceraldehyde 3-phosphate + L-tryptophan + H2O. It functions in the pathway amino-acid biosynthesis; L-tryptophan biosynthesis; L-tryptophan from chorismate: step 5/5. In terms of biological role, the beta subunit is responsible for the synthesis of L-tryptophan from indole and L-serine. The polypeptide is Tryptophan synthase beta chain (Streptococcus thermophilus (strain ATCC BAA-491 / LMD-9)).